A 92-amino-acid chain; its full sequence is Actobindin-A (92 aa).

2 disordered regions span residues 1 to 33 (MSAPNPLLAEINKGADLKHTETQDKSAPKIGSD) and 54 to 92 (LKHAETDDKSAPKINENTTIKPNNHSALLGEIKAKAADS). WH2 domains lie at 3-20 (APNPLLAEINKGADLKHT) and 40-57 (DHASLLSEVEQGAKLKHA). Composition is skewed to basic and acidic residues over residues 13-33 (KGADLKHTETQDKSAPKIGSD) and 54-64 (LKHAETDDKSA). The span at 68–79 (NENTTIKPNNHS) shows a compositional bias: polar residues.

As to quaternary structure, monomer.

Its function is as follows. Is able to bind two actin monomers at high concentrations of G-actin. Inhibits actin polymerization by sequestering G-actin and stabilizing actin dimers. This chain is Actobindin-A (abnA), found in Dictyostelium discoideum (Social amoeba).